A 106-amino-acid chain; its full sequence is UPF0145 protein NE1032 (106 aa).

This sequence belongs to the UPF0145 family.

The protein is UPF0145 protein NE1032 of Nitrosomonas europaea (strain ATCC 19718 / CIP 103999 / KCTC 2705 / NBRC 14298).